A 253-amino-acid chain; its full sequence is 5'-nucleotidase SurE (253 aa).

4 residues coordinate a divalent metal cation: Asp8, Asp9, Ser39, and Asn92.

This sequence belongs to the SurE nucleotidase family. It depends on a divalent metal cation as a cofactor.

It is found in the cytoplasm. It carries out the reaction a ribonucleoside 5'-phosphate + H2O = a ribonucleoside + phosphate. Nucleotidase that shows phosphatase activity on nucleoside 5'-monophosphates. This is 5'-nucleotidase SurE from Burkholderia pseudomallei (strain 668).